A 771-amino-acid chain; its full sequence is Leucine-rich repeat and fibronectin type III domain-containing protein 1 (771 aa).

A signal peptide spans 1–31; that stretch reads MAPGPFSSALLSPPPAALPFLLLLWAGASRG. Residues 32–65 form the LRRNT domain; sequence QPCPGRCICQNVAPTLTMLCAKTGLLFVPPAIDR. At 32–536 the chain is on the extracellular side; it reads QPCPGRCICQ…LRAHFLGGTM (505 aa). LRR repeat units lie at residues 66-87, 90-111, 114-135, 138-159, 163-184, 187-208, and 211-232; these read RVVE…DFAN, SLVH…AFAD, ALRA…QLRG, NLRH…AFDA, TVED…AVGQ, NLNT…TFVQ, and KLVR…GLFL. The N-linked (GlcNAc...) asparagine glycan is linked to Asn87. The LRRCT domain occupies 252-298; that stretch reads NPLHCNCELLWLRRLTREDDLETCATPEHLTDRYFWSIPEEEFLCEP. Residues 299 to 386 form the Ig-like domain; that stretch reads PLITRQAGGR…GEATAPVEVC (88 aa). Cys321 and Cys370 are joined by a disulfide. Asn343 carries an N-linked (GlcNAc...) asparagine glycan. Residues 397–422 form a disordered region; sequence PAAPPPLTEPGSSDIATPGRPGANDS. A Fibronectin type-III domain is found at 424–520; it reads AERRLVAAEL…GCVQFTTAGD (97 aa). A helical transmembrane segment spans residues 537–557; the sequence is IIAIGGVIVASVLVFIVLLMI. Over 558-771 the chain is Cytoplasmic; sequence RYKVYGDGDS…STEWMLESTV (214 aa). Phosphoserine is present on residues Ser613 and Ser718. The segment at 654–743 is disordered; sequence PSEETSGEES…HLDGAGGGAA (90 aa). The span at 719 to 732 shows a compositional bias: basic residues; the sequence is YPRRARRTKRHRST. The short motif at 768–771 is the PDZ-binding element; sequence ESTV.

This sequence belongs to the LRFN family. In terms of assembly, can form heteromeric complexes with LRFN2, LRFN3, LRFN4 and LRFN5. Forms homomeric complexes, but not across cell junctions. Interacts with DLG1, DLG2, DLG3 and DLG4. Interacts with 2 AMPA receptor subunits GRIA1 and GRIA2 and NMDA receptor subunit GRIN1. Glycosylated.

It is found in the membrane. Its subcellular location is the synapse. It localises to the postsynaptic density membrane. Its function is as follows. Promotes neurite outgrowth in hippocampal neurons. Involved in the regulation and maintenance of excitatory synapses. Induces the clustering of excitatory postsynaptic proteins, including DLG4, DLGAP1, GRIA1 and GRIN1. This is Leucine-rich repeat and fibronectin type III domain-containing protein 1 (LRFN1) from Homo sapiens (Human).